The sequence spans 547 residues: Probable FMN/FAD exporter YeeO (547 aa).

The next 11 membrane-spanning stretches (helical) occupy residues 94–114 (ITPL…MGVL), 139–159 (VIMA…AFSL), 174–194 (SLVI…HFGE), 211–231 (LALT…ITLI), 246–268 (LLIN…YGLF), 281–301 (GLTI…AIGF), 318–338 (FSII…SVLF), 350–370 (AGMG…AALI), 404–424 (VFWL…PFAG), 439–459 (VVVI…ASWV), and 486–506 (VVVG…VWMG).

Belongs to the multi antimicrobial extrusion (MATE) (TC 2.A.66.1) family.

It is found in the cell inner membrane. A transporter able to export peptides and flavins. When overexpressed allows cells deleted for multiple peptidases (pepA, pepB, pepD and pepN) to grow in the presence of dipeptides Ala-Gln or Gly-Tyr which otherwise inhibit growth. Cells overexpressing this protein have decreased intracellular levels of Ala-Gln dipeptide, and in a system that produces the Ala-Gln dipeptide, overproduction of this protein increases its export. When overexpressed increases secretion of FMN and FAD but not riboflavin; intracellular concentrations of FMN and riboflavin rise, possibly to compensate for increased secretion. Increased overexpression causes slight cell elongation. The protein is Probable FMN/FAD exporter YeeO (yeeO) of Escherichia coli (strain K12).